The following is a 326-amino-acid chain: Nicotianamine synthase 2 (326 aa).

This sequence belongs to the nicotianamine synthase (NAS)-like family. Expressed in roots.

The catalysed reaction is 3 S-adenosyl-L-methionine = nicotianamine + 3 S-methyl-5'-thioadenosine + 3 H(+). In terms of biological role, synthesizes nicotianamine, a polyamine that is the first intermediate in the synthesis of the phytosiderophores of the mugineic acid type found in gramineae which serve as a sensor for the physiological iron status within the plant, and/or might be involved in the transport of iron. The sequence is that of Nicotianamine synthase 2 (NAS2) from Oryza sativa subsp. indica (Rice).